We begin with the raw amino-acid sequence, 180 residues long: Large ribosomal subunit protein uL5 (180 aa).

It belongs to the universal ribosomal protein uL5 family. In terms of assembly, part of the 50S ribosomal subunit; part of the 5S rRNA/L5/L18/L25 subcomplex. Contacts the 5S rRNA and the P site tRNA. Forms a bridge to the 30S subunit in the 70S ribosome.

Functionally, this is one of the proteins that bind and probably mediate the attachment of the 5S RNA into the large ribosomal subunit, where it forms part of the central protuberance. In the 70S ribosome it contacts protein S13 of the 30S subunit (bridge B1b), connecting the 2 subunits; this bridge is implicated in subunit movement. Contacts the P site tRNA; the 5S rRNA and some of its associated proteins might help stabilize positioning of ribosome-bound tRNAs. In Gloeothece citriformis (strain PCC 7424) (Cyanothece sp. (strain PCC 7424)), this protein is Large ribosomal subunit protein uL5.